A 185-amino-acid chain; its full sequence is Capsid protein (185 aa).

A disordered region spans residues 136-185 (NAPILSTLPETTVVRRRDRGRSPRRRTPSPRRRRSQSPRRRRSQSRESQC). Over residues 149–178 (VRRRDRGRSPRRRTPSPRRRRSQSPRRRRS) the composition is skewed to basic residues. Phosphoserine; by host is present on residues serine 157, serine 164, and serine 172. One copy of the 1; half-length repeat lies at 157–163 (SPRRRTP). Positions 157–179 (SPRRRTPSPRRRRSQSPRRRRSQ) are 3 X 8 AA repeats of S-P-R-R-R-[PR]-S-Q. The short motif at 160 to 177 (RRTPSPRRRRSQSPRRRR) is the Bipartite nuclear localization signal element. Repeat copies occupy residues 164 to 171 (SPRRRRSQ) and 172 to 179 (SPRRRRSQ). The RNA binding stretch occupies residues 179–185 (QSRESQC).

It belongs to the orthohepadnavirus core antigen family. Homodimerizes, then multimerizes. Interacts with cytosol exposed regions of viral L glycoprotein present in the reticulum-to-Golgi compartment. Interacts with human FLNB. Phosphorylated form interacts with host importin alpha; this interaction depends on the exposure of the NLS, which itself depends upon genome maturation and/or phosphorylation of the capsid protein. Interacts with host NUP153. In terms of processing, phosphorylated by host SRPK1, SRPK2, and maybe protein kinase C or GAPDH. Phosphorylation is critical for pregenomic RNA packaging. Protein kinase C phosphorylation is stimulated by HBx protein and may play a role in transport of the viral genome to the nucleus at the late step during the viral replication cycle.

It is found in the virion. Its subcellular location is the host cytoplasm. Its function is as follows. Self assembles to form an icosahedral capsid. Most capsids appear to be large particles with an icosahedral symmetry of T=4 and consist of 240 copies of capsid protein, though a fraction forms smaller T=3 particles consisting of 180 capsid proteins. Entering capsids are transported along microtubules to the nucleus. Phosphorylation of the capsid is thought to induce exposure of nuclear localization signal in the C-terminal portion of the capsid protein that allows binding to the nuclear pore complex via the importin (karyopherin-) alpha and beta. Capsids are imported in intact form through the nuclear pore into the nuclear basket, where it probably binds NUP153. Only capsids that contain the mature viral genome can release the viral DNA and capsid protein into the nucleoplasm. Immature capsids get stuck in the basket. Capsids encapsulate the pre-genomic RNA and the P protein. Pre-genomic RNA is reverse-transcribed into DNA while the capsid is still in the cytoplasm. The capsid can then either be directed to the nucleus, providing more genomes for transcription, or bud through the endoplasmic reticulum to provide new virions. This chain is Capsid protein, found in Hepatitis B virus genotype A1 subtype adw (isolate Philippines/pFDW294/1988) (HBV-A).